Consider the following 952-residue polypeptide: Inactive atromentin synthetase invA6 (952 aa).

Residues D58–V462 are adenylation (A) domain. The Carrier domain maps to A594–V672. Residues T599 to D669 form a thiolation and peptide carrier (T) domain region. Position 631 is an O-(pantetheine 4'-phosphoryl)serine (S631). The tract at residues P695 to F939 is thioesterase (TE) domain.

It belongs to the ATP-dependent AMP-binding enzyme family.

Its function is as follows. Inactive atromentin synthetase homolog. Does not accept 4-hydroxyphenylpyruvate (4-HPP) as substrate. Both the adenylation (A) and the thioesterase (TE) domain of the invA6 enzyme are inactive. This Paxillus involutus (Naked brimcap) protein is Inactive atromentin synthetase invA6 (invA6).